The sequence spans 394 residues: Na(+)/H(+) antiporter NhaA (394 aa).

A run of 11 helical transmembrane segments spans residues 11–31, 59–79, 95–115, 125–145, 155–175, 177–197, 203–220, 254–274, 296–316, 328–348, and 365–385; these read LEAA…IFAN, LLMW…GMEV, IFPA…YWFI, GWAI…ALLS, FLLA…ALFF, HEMS…LVAM, TGLI…ASVL, ALAP…NAGV, LIIG…LLGI, IFAI…IAGL, and LGIL…LKIT.

This sequence belongs to the NhaA Na(+)/H(+) (TC 2.A.33) antiporter family.

It localises to the cell inner membrane. It carries out the reaction Na(+)(in) + 2 H(+)(out) = Na(+)(out) + 2 H(+)(in). Its function is as follows. Na(+)/H(+) antiporter that extrudes sodium in exchange for external protons. This is Na(+)/H(+) antiporter NhaA from Actinobacillus pleuropneumoniae serotype 3 (strain JL03).